The primary structure comprises 169 residues: Putative outer membrane protein BBA03 (169 aa).

It localises to the cell outer membrane. This chain is Putative outer membrane protein BBA03, found in Borreliella burgdorferi (strain ATCC 35210 / DSM 4680 / CIP 102532 / B31) (Borrelia burgdorferi).